Consider the following 731-residue polypeptide: Lanosterol synthase ERG7 (731 aa).

Residue Thr2 is modified to N-acetylthreonine. A PFTB 1 repeat occupies 125 to 167 (RIELIRYIVNTAHPVDGGWGLHSVDKSTVFGTVLNYVILRLLG). Residue Asp456 is the Proton donor of the active site. The PFTB 2 repeat unit spans residues 615–661 (VRKGCDFLVSKQMKDGGWGESMKSSELHSYVDSEKSLVVQTAWALIA).

The protein belongs to the terpene cyclase/mutase family.

It localises to the lipid droplet. The protein localises to the endoplasmic reticulum membrane. It catalyses the reaction (S)-2,3-epoxysqualene = lanosterol. The protein operates within terpene metabolism; lanosterol biosynthesis; lanosterol from farnesyl diphosphate: step 3/3. Its activity is regulated as follows. Catalytic activity requires the presence of ERG27. Lanosterol synthase; part of the third module of ergosterol biosynthesis pathway that includes the late steps of the pathway. ERG7 catalyzes the cyclization of (S)-2,3 oxidosqualene to lanosterol, a reaction that forms the sterol core. The third module or late pathway involves the ergosterol synthesis itself through consecutive reactions that mainly occur in the endoplasmic reticulum (ER) membrane. Firstly, the squalene synthase ERG9 catalyzes the condensation of 2 farnesyl pyrophosphate moieties to form squalene, which is the precursor of all steroids. Squalene synthase is crucial for balancing the incorporation of farnesyl diphosphate (FPP) into sterol and nonsterol isoprene synthesis. Secondly, the squalene epoxidase ERG1 catalyzes the stereospecific oxidation of squalene to (S)-2,3-epoxysqualene, which is considered to be a rate-limiting enzyme in steroid biosynthesis. Then, the lanosterol synthase ERG7 catalyzes the cyclization of (S)-2,3 oxidosqualene to lanosterol, a reaction that forms the sterol core. In the next steps, lanosterol is transformed to zymosterol through a complex process involving various demethylation, reduction and desaturation reactions. The lanosterol 14-alpha-demethylase ERG11 (also known as CYP51) catalyzes C14-demethylation of lanosterol to produce 4,4'-dimethyl cholesta-8,14,24-triene-3-beta-ol, which is critical for ergosterol biosynthesis. The C-14 reductase ERG24 reduces the C14=C15 double bond of 4,4-dimethyl-cholesta-8,14,24-trienol to produce 4,4-dimethyl-cholesta-8,24-dienol. 4,4-dimethyl-cholesta-8,24-dienol is substrate of the C-4 demethylation complex ERG25-ERG26-ERG27 in which ERG25 catalyzes the three-step monooxygenation required for the demethylation of 4,4-dimethyl and 4alpha-methylsterols, ERG26 catalyzes the oxidative decarboxylation that results in a reduction of the 3-beta-hydroxy group at the C-3 carbon to an oxo group, and ERG27 is responsible for the reduction of the keto group on the C-3. ERG28 has a role as a scaffold to help anchor ERG25, ERG26 and ERG27 to the endoplasmic reticulum and ERG29 regulates the activity of the iron-containing C4-methylsterol oxidase ERG25. Then, the sterol 24-C-methyltransferase ERG6 catalyzes the methyl transfer from S-adenosyl-methionine to the C-24 of zymosterol to form fecosterol. The C-8 sterol isomerase ERG2 catalyzes the reaction which results in unsaturation at C-7 in the B ring of sterols and thus converts fecosterol to episterol. The sterol-C5-desaturase ERG3 then catalyzes the introduction of a C-5 double bond in the B ring to produce 5-dehydroepisterol. The C-22 sterol desaturase ERG5 further converts 5-dehydroepisterol into ergosta-5,7,22,24(28)-tetraen-3beta-ol by forming the C-22(23) double bond in the sterol side chain. Finally, ergosta-5,7,22,24(28)-tetraen-3beta-ol is substrate of the C-24(28) sterol reductase ERG4 to produce ergosterol. This Saccharomyces cerevisiae (strain ATCC 204508 / S288c) (Baker's yeast) protein is Lanosterol synthase ERG7.